The primary structure comprises 93 residues: Ubiquinol-cytochrome-c reductase complex assembly factor 3 (93 aa).

At 1–7 (MDSLRKM) the chain is on the mitochondrial matrix side. The chain crosses the membrane as a helical span at residues 8–28 (LISVAMLGAGAGVGYALLVIV). Residues 23–80 (ALLVIVTPGERRKQEMLKEMPLQDPRSREEAARTQQLLLATLQEAATTQENVAWRKNW) form a mediates lipid-binding region. Over 29–93 (TPGERRKQEM…GEGGAGGRSP (65 aa)) the chain is Mitochondrial intermembrane.

It belongs to the UQCC3 family. In terms of assembly, associates with the ubiquinol-cytochrome c reductase complex (mitochondrial respiratory chain complex III or cytochrome b-c1 complex). Interacts with UQCC1. Forms a complex, named COMC, composed of UQCC1, UQCC2; UQCC3 and UQCC4; mediates MT-CYB hemylation and association with the first nuclear-encoded complex III subunit UQCRQ. In terms of processing, probably cleaved by OMA1 under mitochondrial stress conditions.

It localises to the mitochondrion inner membrane. Functionally, required for the assembly of the ubiquinol-cytochrome c reductase complex (mitochondrial respiratory chain complex III or cytochrome b-c1 complex), mediating cytochrome b recruitment and probably stabilization within the complex. Thereby, plays an important role in ATP production by mitochondria. Cardiolipin-binding protein, it may also control the cardiolipin composition of mitochondria membranes and their morphology. The polypeptide is Ubiquinol-cytochrome-c reductase complex assembly factor 3 (Homo sapiens (Human)).